A 350-amino-acid chain; its full sequence is 3-isopropylmalate dehydrogenase (350 aa).

An NAD(+)-binding site is contributed by 76–87; that stretch reads GPKWDNAPKRPE. Substrate-binding residues include R94, R104, R132, and D217. D217, D241, and D245 together coordinate Mg(2+). 275 to 287 is a binding site for NAD(+); sequence GSAPDIANQNIAN.

It belongs to the isocitrate and isopropylmalate dehydrogenases family. LeuB type 1 subfamily. In terms of assembly, homodimer. Requires Mg(2+) as cofactor. Mn(2+) serves as cofactor.

It is found in the cytoplasm. The enzyme catalyses (2R,3S)-3-isopropylmalate + NAD(+) = 4-methyl-2-oxopentanoate + CO2 + NADH. Its pathway is amino-acid biosynthesis; L-leucine biosynthesis; L-leucine from 3-methyl-2-oxobutanoate: step 3/4. In terms of biological role, catalyzes the oxidation of 3-carboxy-2-hydroxy-4-methylpentanoate (3-isopropylmalate) to 3-carboxy-4-methyl-2-oxopentanoate. The product decarboxylates to 4-methyl-2 oxopentanoate. The sequence is that of 3-isopropylmalate dehydrogenase from Listeria innocua serovar 6a (strain ATCC BAA-680 / CLIP 11262).